The sequence spans 452 residues: Probable intron-encoded endonuclease 2 (452 aa).

The next 3 helical transmembrane spans lie at 1 to 21 (MNIT…NRKN), 22 to 42 (IILM…LILV), and 57 to 77 (IYII…LVAF). The segment at 1 to 80 (MNITLILFLI…LAILVAFYRL (80 aa)) is ndh-4L exon 1 encoded. The ndh-4L intron 1 encoded stretch occupies residues 81–452 (INSPVKNPRS…SLEGGMNKNI (372 aa)).

It in the N-terminal section; belongs to the complex I subunit 4L family. This sequence in the C-terminal section; belongs to the LAGLIDADG endonuclease family.

It localises to the mitochondrion membrane. Mitochondrial DNA endonuclease involved in intron homing. In Neurospora crassa (strain ATCC 24698 / 74-OR23-1A / CBS 708.71 / DSM 1257 / FGSC 987), this protein is Probable intron-encoded endonuclease 2.